Reading from the N-terminus, the 341-residue chain is Phenylalanine--tRNA ligase alpha subunit (341 aa).

Mg(2+) is bound at residue glutamate 253.

It belongs to the class-II aminoacyl-tRNA synthetase family. Phe-tRNA synthetase alpha subunit type 1 subfamily. In terms of assembly, tetramer of two alpha and two beta subunits. Mg(2+) is required as a cofactor.

It localises to the cytoplasm. The enzyme catalyses tRNA(Phe) + L-phenylalanine + ATP = L-phenylalanyl-tRNA(Phe) + AMP + diphosphate + H(+). In Methylococcus capsulatus (strain ATCC 33009 / NCIMB 11132 / Bath), this protein is Phenylalanine--tRNA ligase alpha subunit.